The following is a 268-amino-acid chain: Glutamate racemase (268 aa).

Substrate-binding positions include Asp-14–Ser-15 and Tyr-46–Gly-47. Cys-78 acts as the Proton donor/acceptor in catalysis. A substrate-binding site is contributed by Asn-79–Thr-80. Catalysis depends on Cys-192, which acts as the Proton donor/acceptor. A substrate-binding site is contributed by Thr-193 to His-194.

Belongs to the aspartate/glutamate racemases family.

The enzyme catalyses L-glutamate = D-glutamate. Its pathway is cell wall biogenesis; peptidoglycan biosynthesis. Its function is as follows. Provides the (R)-glutamate required for cell wall biosynthesis. This Sphingopyxis alaskensis (strain DSM 13593 / LMG 18877 / RB2256) (Sphingomonas alaskensis) protein is Glutamate racemase.